The sequence spans 227 residues: ATP-dependent dethiobiotin synthetase BioD (227 aa).

Residue 13–18 participates in ATP binding; that stretch reads DIGKTY. Thr-17 contributes to the Mg(2+) binding site. Lys-38 is a catalytic residue. Position 42 (Ser-42) interacts with substrate. ATP is bound by residues Asp-55, 116-119, and 179-180; these read EGSG and NN. Mg(2+)-binding residues include Asp-55 and Glu-116.

Belongs to the dethiobiotin synthetase family. As to quaternary structure, homodimer. Mg(2+) is required as a cofactor.

Its subcellular location is the cytoplasm. It carries out the reaction (7R,8S)-7,8-diammoniononanoate + CO2 + ATP = (4R,5S)-dethiobiotin + ADP + phosphate + 3 H(+). Its pathway is cofactor biosynthesis; biotin biosynthesis; biotin from 7,8-diaminononanoate: step 1/2. In terms of biological role, catalyzes a mechanistically unusual reaction, the ATP-dependent insertion of CO2 between the N7 and N8 nitrogen atoms of 7,8-diaminopelargonic acid (DAPA, also called 7,8-diammoniononanoate) to form a ureido ring. In Clostridium botulinum (strain Kyoto / Type A2), this protein is ATP-dependent dethiobiotin synthetase BioD.